Consider the following 60-residue polypeptide: Large ribosomal subunit protein uL30 (60 aa).

It belongs to the universal ribosomal protein uL30 family. Part of the 50S ribosomal subunit.

This Saccharopolyspora erythraea (strain ATCC 11635 / DSM 40517 / JCM 4748 / NBRC 13426 / NCIMB 8594 / NRRL 2338) protein is Large ribosomal subunit protein uL30.